The sequence spans 549 residues: Neutral amino acid transporter 9 (549 aa).

The tract at residues 1–27 (MDEDSKPLLGSVPTGDYYTDSLDPKQR) is disordered. Over 1-107 (MDEDSKPLLG…GGDSPIKNPS (107 aa)) the chain is Cytoplasmic. Residues 108–128 (IVTIFAIWNTMMGTSILSIPW) form a helical membrane-spanning segment. The interval 117 to 122 (TMMGTS) is important for arginine binding and amino acid transport. Ser-122 is a binding site for arginine. Topologically, residues 129–134 (GIKQAG) are lumenal. Residues 135–155 (FTLGIIIIVLMGLLTLYCCYR) form a helical membrane-spanning segment. Residues 156-186 (VLKSTKSIPYVDTSDWEFPDVCKYYFGGFGK) lie on the Cytoplasmic side of the membrane. Residues 187 to 213 (WSSLVFSLVSLIGAMVVYWVLMSNFLF) form a helical membrane-spanning segment. Over 214–271 (NTGKFIFNYVHNVNTSDAFGTNGTERVICPYPDVDPHGNSSTSLYSGSDNSTGLEFDH) the chain is Lumenal. N-linked (GlcNAc...) asparagine glycans are attached at residues Asn-227, Asn-235, Asn-252, and Asn-263. A disulfide bridge connects residues Cys-242 and Cys-412. Residues 272–288 (WWSKTNTIPFYLILLLL) form a helical membrane-spanning segment. The Cytoplasmic segment spans residues 289–297 (PLLNFRSAS). A helical membrane pass occupies residues 298–322 (FFARFTFLGTISVIYLIFLVTYKAI). Residues 323 to 344 (QLGFHLEFHWFDSSMFFVPEFR) lie on the Lumenal side of the membrane. A helical transmembrane segment spans residues 345–365 (TLFPQLSGVLTLAFFIHNCII). The Cytoplasmic portion of the chain corresponds to 366–382 (TLMKNNKHQENNVRDLS). A helical membrane pass occupies residues 383–403 (LAYLLVGLTYLYVGVLIFAAF). Residues 404–425 (PSPPLSKECIEPNFLDNFPSSD) are Lumenal-facing. The chain crosses the membrane as a helical span at residues 426 to 446 (ILVFVARTFLLFQMTTVYPLL). Positions 432–442 (RTFLLFQMTTV) match the CARC motif motif. The CRAC motif motif lies at 445 to 451 (LLGYLVR). The Cytoplasmic segment spans residues 447-467 (GYLVRVQLMGQIFGNHYPGFL). The chain crosses the membrane as a helical span at residues 468–488 (HVFVLNVFVVGAGVLMARFYP). The Lumenal segment spans residues 489–495 (NIGSIIR). The helical transmembrane segment at 496–516 (YSGALCGLALVFVLPSLIHMV) threads the bilayer. Residues 517–528 (SLKRRGELRWTS) are Cytoplasmic-facing. Residues 529-549 (TLFHGFLILLGVANLLGQFFM) traverse the membrane as a helical segment.

Belongs to the amino acid/polyamine transporter 2 family. SLC38A9 subfamily. As to quaternary structure, associated component of the Ragulator complex. Associated component of the Rag GTPases heterodimers (RRAGA and RRAGC). Post-translationally, glycosylated.

The protein localises to the lysosome membrane. The protein resides in the late endosome membrane. The enzyme catalyses L-leucine(in) = L-leucine(out). The catalysed reaction is L-tyrosine(in) = L-tyrosine(out). It carries out the reaction L-glutamine(out) = L-glutamine(in). It catalyses the reaction L-asparagine(out) = L-asparagine(in). Amino acid transport activity is increased by sodium. Transport of L-glutamine, leucine and tyrosine is increased by arginine binding. Lysosomal amino acid transporter involved in the activation of mTORC1 in response to amino acid levels. Probably acts as an amino acid sensor of the Rag GTPases and Ragulator complexes, 2 complexes involved in amino acid sensing and activation of mTORC1, a signaling complex promoting cell growth in response to growth factors, energy levels, and amino acids. Following activation by amino acids, the Ragulator and Rag GTPases function as a scaffold recruiting mTORC1 to lysosomes where it is in turn activated. SLC38A9 mediates transport of amino acids with low capacity and specificity with a slight preference for polar amino acids. Acts as an arginine sensor. Following activation by arginine binding, mediates transport of L-glutamine, leucine and tyrosine with high efficiency, and is required for the efficient utilization of these amino acids after lysosomal protein degradation. However, the transport mechanism is not well defined and the role of sodium is not clear. Guanine exchange factor (GEF) that, upon arginine binding, stimulates GDP release from RRAGA and therefore activates the Rag GTPase heterodimer and the mTORC1 pathway in response to nutrient sufficiency. This is Neutral amino acid transporter 9 from Danio rerio (Zebrafish).